The following is a 204-amino-acid chain: Guanylate kinase (204 aa).

The 180-residue stretch at Gly-5 to Glu-184 folds into the Guanylate kinase-like domain. Gly-12–Gly-19 lines the ATP pocket.

Belongs to the guanylate kinase family.

It localises to the cytoplasm. It catalyses the reaction GMP + ATP = GDP + ADP. Its function is as follows. Essential for recycling GMP and indirectly, cGMP. The polypeptide is Guanylate kinase (Lactobacillus johnsonii (strain CNCM I-12250 / La1 / NCC 533)).